A 128-amino-acid polypeptide reads, in one-letter code: uncharacterized protein (128 aa).

The tract at residues Met1–Thr26 is disordered. A helical membrane pass occupies residues Ile105 to Val127.

It belongs to the flocculin family.

It is found in the membrane. This is an uncharacterized protein from Saccharomyces cerevisiae (strain ATCC 204508 / S288c) (Baker's yeast).